The chain runs to 1353 residues: Trifunctional purine biosynthetic protein adenosine-3 (1353 aa).

In terms of domain architecture, ATP-grasp spans K114–S321. Residues E193 to L196, E200, R223, and N232 each bind ATP. E291 and N293 together coordinate Mg(2+). An AIRS domain region spans residues G441–R1155. Residues S814 and S816 each carry the phosphoserine modification. The interval R1153–Q1353 is GART domain. Position 1164–1166 (G1164–N1166) interacts with N(1)-(5-phospho-beta-D-ribosyl)glycinamide. Residues R1219, M1244–L1247, and N1261 contribute to the (6R)-10-formyltetrahydrofolate site. H1263 acts as the Proton donor in catalysis. D1295–D1299 lines the (6R)-10-formyltetrahydrofolate pocket. H1325–E1328 serves as a coordination point for N(1)-(5-phospho-beta-D-ribosyl)glycinamide.

In the N-terminal section; belongs to the GARS family. This sequence in the central section; belongs to the AIR synthase family. The protein in the C-terminal section; belongs to the GART family. Homodimer. It depends on Mg(2+) as a cofactor. Mn(2+) serves as cofactor.

It carries out the reaction 5-phospho-beta-D-ribosylamine + glycine + ATP = N(1)-(5-phospho-beta-D-ribosyl)glycinamide + ADP + phosphate + H(+). The catalysed reaction is 2-formamido-N(1)-(5-O-phospho-beta-D-ribosyl)acetamidine + ATP = 5-amino-1-(5-phospho-beta-D-ribosyl)imidazole + ADP + phosphate + H(+). It catalyses the reaction N(1)-(5-phospho-beta-D-ribosyl)glycinamide + (6R)-10-formyltetrahydrofolate = N(2)-formyl-N(1)-(5-phospho-beta-D-ribosyl)glycinamide + (6S)-5,6,7,8-tetrahydrofolate + H(+). The protein operates within purine metabolism; IMP biosynthesis via de novo pathway; 5-amino-1-(5-phospho-D-ribosyl)imidazole from N(2)-formyl-N(1)-(5-phospho-D-ribosyl)glycinamide: step 2/2. It participates in purine metabolism; IMP biosynthesis via de novo pathway; N(1)-(5-phospho-D-ribosyl)glycinamide from 5-phospho-alpha-D-ribose 1-diphosphate: step 2/2. Its pathway is purine metabolism; IMP biosynthesis via de novo pathway; N(2)-formyl-N(1)-(5-phospho-D-ribosyl)glycinamide from N(1)-(5-phospho-D-ribosyl)glycinamide (10-formyl THF route): step 1/1. In terms of biological role, trifunctional enzyme that catalyzes three distinct reactions as part of the 'de novo' inosine monophosphate biosynthetic pathway. In Drosophila melanogaster (Fruit fly), this protein is Trifunctional purine biosynthetic protein adenosine-3.